Here is an 842-residue protein sequence, read N- to C-terminus: Elongation factor 2 (842 aa).

The 237-residue stretch at 17–253 folds into the tr-type G domain; sequence TNVRNMSVIA…LWGDSYFNPK (237 aa). GTP is bound by residues 26 to 33, 158 to 161, and 213 to 215; these read AHVDHGKS, NKVD, and SGL. H699 carries the post-translational modification Diphthamide.

This sequence belongs to the TRAFAC class translation factor GTPase superfamily. Classic translation factor GTPase family. EF-G/EF-2 subfamily.

It localises to the cytoplasm. It carries out the reaction GTP + H2O = GDP + phosphate + H(+). Functionally, catalyzes the GTP-dependent ribosomal translocation step during translation elongation. During this step, the ribosome changes from the pre-translocational (PRE) to the post-translocational (POST) state as the newly formed A-site-bound peptidyl-tRNA and P-site-bound deacylated tRNA move to the P and E sites, respectively. Catalyzes the coordinated movement of the two tRNA molecules, the mRNA and conformational changes in the ribosome. The protein is Elongation factor 2 (EFT1) of Naumovozyma castellii (Yeast).